Reading from the N-terminus, the 899-residue chain is Suppressor of glycerol defect protein 1 (899 aa).

The segment covering 24–33 (QDERFSISEG) has biased composition (basic and acidic residues). 2 disordered regions span residues 24–181 (QDER…VSYP) and 248–326 (ETNS…DDSE). The segment covering 34 to 49 (KKRRRGNGKHLSRKEK) has biased composition (basic residues). Positions 65 to 77 (REINSSRLKSAPT) are enriched in polar residues. The span at 103 to 126 (DESESNENWDSDEVLTDEVAEESG) shows a compositional bias: acidic residues. 3 stretches are compositionally biased toward basic and acidic residues: residues 134–143 (ETMKKLESLK), 162–174 (SYEK…RDTN), and 251–264 (SMRK…KAFS). A compositionally biased stretch (acidic residues) spans 265 to 292 (SDDDLSASDFEDSDGLSESDNDSVADSD). An MIF4G domain is found at 335-540 (SKKVNSSLNK…DTMSDLKNNR (206 aa)). Positions 644 to 781 (DIRRAIFISI…KLDVFKHVPF (138 aa)) constitute an MI domain. Position 736 is a phosphoserine (Ser-736).

This sequence belongs to the CWC22 family. In terms of assembly, interacts with PLC1.

The protein localises to the nucleus. It is found in the nucleolus. Functionally, involved in osmoregulatory glycerol response, probably through its interaction with PLC1 which regulates the expression of GDP1. In Saccharomyces cerevisiae (strain ATCC 204508 / S288c) (Baker's yeast), this protein is Suppressor of glycerol defect protein 1 (SGD1).